Consider the following 136-residue polypeptide: ATP synthase epsilon chain (136 aa).

Belongs to the ATPase epsilon chain family. As to quaternary structure, F-type ATPases have 2 components, CF(1) - the catalytic core - and CF(0) - the membrane proton channel. CF(1) has five subunits: alpha(3), beta(3), gamma(1), delta(1), epsilon(1). CF(0) has three main subunits: a, b and c.

The protein localises to the cell inner membrane. Its function is as follows. Produces ATP from ADP in the presence of a proton gradient across the membrane. The protein is ATP synthase epsilon chain of Afipia carboxidovorans (strain ATCC 49405 / DSM 1227 / KCTC 32145 / OM5) (Oligotropha carboxidovorans).